The sequence spans 179 residues: MSRIGKMPIKLAEQAKIEIKDNVISVSGPKGNLEQRLVPEVTVDIADGQVAVTRIDDSKRSRAMHGLYRMLISNMLEGVTSGFSKKLLINGVGFRAEKKAEFLALTLGYSHMIYFKAPEEIAIECPDPTSIVVSGIDKALVGQVAAKIRSFRKPEPYRGKGIRYSDEFVRRKEGKTAGK.

The protein belongs to the universal ribosomal protein uL6 family. Part of the 50S ribosomal subunit.

This protein binds to the 23S rRNA, and is important in its secondary structure. It is located near the subunit interface in the base of the L7/L12 stalk, and near the tRNA binding site of the peptidyltransferase center. In Chlorobium phaeobacteroides (strain BS1), this protein is Large ribosomal subunit protein uL6.